Here is a 332-residue protein sequence, read N- to C-terminus: Catabolite control protein A (332 aa).

The HTH lacI-type domain occupies 1–57 (MNVTIYDVAREASVSMATVSRVVNGNPNVKPSTRKKVLETIERLGYRPNAVARGLAS). The H-T-H motif DNA-binding region spans 5-24 (IYDVAREASVSMATVSRVVN).

Its function is as follows. Global transcriptional regulator of carbon catabolite repression (CCR) and carbon catabolite activation (CCA), which ensures optimal energy usage under diverse conditions. This Priestia megaterium (Bacillus megaterium) protein is Catabolite control protein A (ccpA).